Here is an 82-residue protein sequence, read N- to C-terminus: Small ribosomal subunit protein bS16 (82 aa).

Belongs to the bacterial ribosomal protein bS16 family.

The protein is Small ribosomal subunit protein bS16 of Synechococcus elongatus (strain ATCC 33912 / PCC 7942 / FACHB-805) (Anacystis nidulans R2).